Reading from the N-terminus, the 191-residue chain is Fe/S biogenesis protein NfuA (191 aa).

[4Fe-4S] cluster is bound by residues Cys-149 and Cys-152.

This sequence belongs to the NfuA family. As to quaternary structure, homodimer. The cofactor is [4Fe-4S] cluster.

Involved in iron-sulfur cluster biogenesis. Binds a 4Fe-4S cluster, can transfer this cluster to apoproteins, and thereby intervenes in the maturation of Fe/S proteins. Could also act as a scaffold/chaperone for damaged Fe/S proteins. The protein is Fe/S biogenesis protein NfuA of Klebsiella pneumoniae (strain 342).